The following is a 345-amino-acid chain: S-adenosylmethionine:tRNA ribosyltransferase-isomerase (345 aa).

This sequence belongs to the QueA family. In terms of assembly, monomer.

It is found in the cytoplasm. It catalyses the reaction 7-aminomethyl-7-carbaguanosine(34) in tRNA + S-adenosyl-L-methionine = epoxyqueuosine(34) in tRNA + adenine + L-methionine + 2 H(+). It participates in tRNA modification; tRNA-queuosine biosynthesis. Functionally, transfers and isomerizes the ribose moiety from AdoMet to the 7-aminomethyl group of 7-deazaguanine (preQ1-tRNA) to give epoxyqueuosine (oQ-tRNA). The chain is S-adenosylmethionine:tRNA ribosyltransferase-isomerase from Shewanella amazonensis (strain ATCC BAA-1098 / SB2B).